Here is a 657-residue protein sequence, read N- to C-terminus: Translation factor GUF1, mitochondrial (657 aa).

Residues 1–39 (MRGCLQSVKWLTSALRPSQSLASSTRYPRRLLSTSAPRN) constitute a mitochondrion transit peptide. In terms of domain architecture, tr-type G spans 59–239 (ERFRNFCIVA…TVIEQIPAPV (181 aa)). GTP contacts are provided by residues 121 to 128 (HQGEDYLL), 185 to 189 (INKVD), and 239 to 242 (VGDR).

This sequence belongs to the TRAFAC class translation factor GTPase superfamily. Classic translation factor GTPase family. LepA subfamily.

It localises to the mitochondrion inner membrane. The enzyme catalyses GTP + H2O = GDP + phosphate + H(+). In terms of biological role, promotes mitochondrial protein synthesis. May act as a fidelity factor of the translation reaction, by catalyzing a one-codon backward translocation of tRNAs on improperly translocated ribosomes. Binds to mitochondrial ribosomes in a GTP-dependent manner. This chain is Translation factor GUF1, mitochondrial, found in Ajellomyces capsulatus (strain H143) (Darling's disease fungus).